Here is a 395-residue protein sequence, read N- to C-terminus: Tyrosine--tRNA ligase (395 aa).

Residues 42-51 (PTAPDIHLGH) carry the 'HIGH' region motif. Residues 226–230 (KMSKS) carry the 'KMSKS' region motif. Position 229 (Lys-229) interacts with ATP. Positions 334–394 (IAISNLLKDA…GKRKFARITL (61 aa)) constitute an S4 RNA-binding domain.

It belongs to the class-I aminoacyl-tRNA synthetase family. TyrS type 2 subfamily. In terms of assembly, homodimer.

Its subcellular location is the cytoplasm. It carries out the reaction tRNA(Tyr) + L-tyrosine + ATP = L-tyrosyl-tRNA(Tyr) + AMP + diphosphate + H(+). Its function is as follows. Catalyzes the attachment of tyrosine to tRNA(Tyr) in a two-step reaction: tyrosine is first activated by ATP to form Tyr-AMP and then transferred to the acceptor end of tRNA(Tyr). In Photobacterium profundum (strain SS9), this protein is Tyrosine--tRNA ligase.